Consider the following 40-residue polypeptide: Small polypeptide DEVIL 6 (40 aa).

A required for DVL/RTFL small polypeptide activity region spans residues 9–40 (SSSRGLGGVLREQRAKLYIIKRCVVMLLCWQD). Residues 12 to 28 (RGLGGVLREQRAKLYII) form a helical membrane-spanning segment.

It belongs to the DVL/RTFL small polypeptides family.

The protein resides in the cell membrane. Functionally, small polypeptide acting as a regulatory molecule which coordinates cellular responses required for differentiation, growth and development, probably by restricting polar cell proliferation in lateral organs and coordinating socket cell recruitment and differentiation at trichome sites. This is Small polypeptide DEVIL 6 from Arabidopsis thaliana (Mouse-ear cress).